Reading from the N-terminus, the 304-residue chain is Secreted mono- and diacylglycerol lipase MDL2 (304 aa).

A signal peptide spans Met1–Gly19. A disulfide bridge links Cys55 with Cys297. Residues Asn102 and Asn161 are each glycosylated (N-linked (GlcNAc...) asparagine). The active-site Nucleophile is Ser171. Asp228 is an active-site residue. An N-linked (GlcNAc...) asparagine glycan is attached at Asn253. The active site involves His281.

Belongs to the AB hydrolase superfamily. Lipase family. Class 3 subfamily.

The protein resides in the secreted. Its subcellular location is the cell wall. The enzyme catalyses a monoacylglycerol + H2O = glycerol + a fatty acid + H(+). It carries out the reaction a diacylglycerol + H2O = a monoacylglycerol + a fatty acid + H(+). Functionally, secreted lipase involved in Dandruff and seborrheic dermatitis (D/SD) probably via lipase-mediated breakdown of sebaceous lipids and release of irritating free fatty acids. Shows activity against monoglyceride and diglyceride substrates, but not triglyceride substrates and does not exhibit regio-selective production of diacylglycerols. Hydrolyzes both 1,2- and 1,3-diacylglycerols. Also hydrolyzes distearin, dilinolein and dipalmitolein. Cleaves oleic acid from 1,2 isomers of diolein on both the 1 and the 2 position of the glycerol backbone, resulting mainly in free fatty acids but no monoolein is detected. Shows activity on monoolein and liberates mostly free fatty acids, but can also perform the reverse reaction and produce diolein. The chain is Secreted mono- and diacylglycerol lipase MDL2 from Malassezia globosa (strain ATCC MYA-4612 / CBS 7966) (Dandruff-associated fungus).